The primary structure comprises 1069 residues: Enteropeptidase (1069 aa).

Topologically, residues 1–18 (MKSSRDEAVGHHSISSFE) are cytoplasmic. The helical; Signal-anchor for type II membrane protein transmembrane segment at 19 to 47 (VMLSALFIMLMVFSIGLIAVSWLAVKESE) threads the bilayer. At 48 to 1069 (GDAALGKSHE…FIEWIHSFLH (1022 aa)) the chain is on the extracellular side. Residues 54–169 (KSHEVRGTFK…NSIDITASLS (116 aa)) enclose the SEA domain. N-linked (GlcNAc...) asparagine glycosylation is found at N147, N197, and N212. The LDL-receptor class A 1 domain maps to 227–268 (IECQPGSRPCAHAWNCVATDLFCDGEVNCPDGSDEDTGLCAT). 4 disulfides stabilise this stretch: C229/C242, C236/C255, C249/C266, and C270/C298. Positions 270-379 (CDGRFLLTGD…IGFNATYSTF (110 aa)) constitute a CUB 1 domain. N373, N380, N433, N515, N579, and N675 each carry an N-linked (GlcNAc...) asparagine glycan. An MAM domain is found at 387–549 (YEKIDCTFDD…ISLTNGICSQ (163 aa)). An intrachain disulfide couples C569 to C597. The CUB 2 domain occupies 569–679 (CGGPFELWEP…KGFKANFTSG (111 aa)). The 39-residue stretch at 686–724 (EPCQDDEFQCKDGNCIPLGNLCDSYPHCRDGSDEASCVR) folds into the LDL-receptor class A 2 domain. 3 disulfide bridges follow: C688–C700, C695–C713, and C707–C722. One can recognise an SRCR domain in the interval 723–816 (VRFLNGTRSN…LILLQCNHKS (94 aa)). 4 N-linked (GlcNAc...) asparagine glycosylation sites follow: N727, N751, N770, and N791. Disulfide bonds link C802-C812, C817-C945, C859-C875, C959-C1027, C991-C1006, and C1017-C1045. A Peptidase S1 domain is found at 830 to 1069 (IVGGSDAQAG…FIEWIHSFLH (240 aa)). H874 acts as the Charge relay system in catalysis. N897 is a glycosylation site (N-linked (GlcNAc...) asparagine). The active-site Charge relay system is D925. 2 N-linked (GlcNAc...) asparagine glycosylation sites follow: N936 and N999. S1021 serves as the catalytic Charge relay system.

Belongs to the peptidase S1 family. In terms of assembly, heterodimer of a catalytic (light) chain and a multidomain (heavy) chain linked by a disulfide bond. The chains are derived from a single precursor that is cleaved by a trypsin-like protease.

The protein localises to the membrane. It catalyses the reaction Activation of trypsinogen by selective cleavage of 6-Lys-|-Ile-7 bond.. In terms of biological role, responsible for initiating activation of pancreatic proteolytic proenzymes (trypsin, chymotrypsin and carboxypeptidase A). It catalyzes the conversion of trypsinogen to trypsin which in turn activates other proenzymes including chymotrypsinogen, procarboxypeptidases, and proelastases. The sequence is that of Enteropeptidase (Tmprss15) from Mus musculus (Mouse).